Here is a 160-residue protein sequence, read N- to C-terminus: SsrA-binding protein (160 aa).

This sequence belongs to the SmpB family.

Its subcellular location is the cytoplasm. Functionally, required for rescue of stalled ribosomes mediated by trans-translation. Binds to transfer-messenger RNA (tmRNA), required for stable association of tmRNA with ribosomes. tmRNA and SmpB together mimic tRNA shape, replacing the anticodon stem-loop with SmpB. tmRNA is encoded by the ssrA gene; the 2 termini fold to resemble tRNA(Ala) and it encodes a 'tag peptide', a short internal open reading frame. During trans-translation Ala-aminoacylated tmRNA acts like a tRNA, entering the A-site of stalled ribosomes, displacing the stalled mRNA. The ribosome then switches to translate the ORF on the tmRNA; the nascent peptide is terminated with the 'tag peptide' encoded by the tmRNA and targeted for degradation. The ribosome is freed to recommence translation, which seems to be the essential function of trans-translation. This chain is SsrA-binding protein, found in Proteus mirabilis (strain HI4320).